The primary structure comprises 366 residues: Mitochondrial carrier protein MTM1 (366 aa).

Solcar repeat units lie at residues 14–149, 156–250, and 266–359; these read ERML…IRDV, YPTL…CKER, and VHFI…SKKV. Helical transmembrane passes span 17-36, 126-146, 162-182, 229-249, 268-286, and 331-352; these read LSAG…MDVV, SLTL…YEYI, LFCG…LELV, TLWR…LCKE, FINS…AICT, and LYTG…MISS.

It belongs to the mitochondrial carrier (TC 2.A.29) family.

The protein resides in the mitochondrion inner membrane. Involved in the mitochondrial activation of SOD2 by specifically facilitating insertion of the essential manganese cofactor. Has the ability to activate iron regulon in an iron-dependent manner. Responds to calorie restriction (CR) strength. The protein is Mitochondrial carrier protein MTM1 (MTM1) of Saccharomyces cerevisiae (strain ATCC 204508 / S288c) (Baker's yeast).